A 163-amino-acid polypeptide reads, in one-letter code: DNA endonuclease I-CreI (163 aa).

G19 and D20 together coordinate Mg(2+). Interaction with DNA regions lie at residues 26–38 (QIKP…FKHQ), 44–47 (QVTQ), 68–70 (RDR), and 138–143 (SKTRKT).

Belongs to the LAGLIDADG endonuclease family. Homodimer. The cofactor is Mg(2+). Mn(2+) is required as a cofactor. Co(2+) serves as cofactor. It depends on Ni(2+) as a cofactor. Requires Zn(2+) as cofactor.

The protein resides in the plastid. It localises to the chloroplast. Functionally, endonuclease involved in group I intron homing. Recognizes and cleaves a 19-24 bp palindromic DNA site. The polypeptide is DNA endonuclease I-CreI (Chlamydomonas reinhardtii (Chlamydomonas smithii)).